Reading from the N-terminus, the 237-residue chain is Aliphatic sulfonates import ATP-binding protein SsuB 1 (237 aa).

Residues 5 to 221 (LMNIRVDRKA…PRDRRDPLLA (217 aa)) form the ABC transporter domain. ATP is bound at residue 38-45 (GPSGCGKS).

It belongs to the ABC transporter superfamily. Aliphatic sulfonates importer (TC 3.A.1.17.2) family. As to quaternary structure, the complex is composed of two ATP-binding proteins (SsuB), two transmembrane proteins (SsuC) and a solute-binding protein (SsuA).

Its subcellular location is the cell inner membrane. It carries out the reaction ATP + H2O + aliphatic sulfonate-[sulfonate-binding protein]Side 1 = ADP + phosphate + aliphatic sulfonateSide 2 + [sulfonate-binding protein]Side 1.. In terms of biological role, part of the ABC transporter complex SsuABC involved in aliphatic sulfonates import. Responsible for energy coupling to the transport system. This Pseudomonas savastanoi pv. phaseolicola (strain 1448A / Race 6) (Pseudomonas syringae pv. phaseolicola (strain 1448A / Race 6)) protein is Aliphatic sulfonates import ATP-binding protein SsuB 1.